Here is a 78-residue protein sequence, read N- to C-terminus: Defensin-like protein 149 (78 aa).

The N-terminal stretch at Met-1–Ala-25 is a signal peptide. 4 disulfide bridges follow: Cys-36-Cys-77, Cys-45-Cys-65, Cys-50-Cys-71, and Cys-54-Cys-73.

This sequence belongs to the DEFL family.

Its subcellular location is the secreted. The protein is Defensin-like protein 149 (LCR5) of Arabidopsis thaliana (Mouse-ear cress).